Reading from the N-terminus, the 841-residue chain is Tax1-binding protein 1 homolog (841 aa).

Coiled coils occupy residues 173–560 (TTVL…EKAR) and 612–640 (YSIE…KQAG). The segment at 419–441 (MRDEQQQKSNPFAKKDQGADNNR) is disordered. Residues 431–441 (AKKDQGADNNR) show a composition bias toward basic and acidic residues. The segment at 678–759 (YASQETRDGA…NVNFEQTPDP (82 aa)) is disordered. Residues 741–751 (DEDDDDDDDNV) are compositionally biased toward acidic residues. UBZ1-type zinc fingers lie at residues 779–805 (NKKC…VESH) and 806–832 (WKVC…VQTH). The Zn(2+) site is built by Cys-782, Cys-785, His-801, His-805, Cys-809, Cys-812, His-828, and His-832.

Its function is as follows. May have an anti-apoptotic activity. The chain is Tax1-binding protein 1 homolog (tax1bp1) from Xenopus tropicalis (Western clawed frog).